A 433-amino-acid polypeptide reads, in one-letter code: Glutamate-1-semialdehyde 2,1-aminomutase (433 aa).

Lys-270 is subject to N6-(pyridoxal phosphate)lysine.

Belongs to the class-III pyridoxal-phosphate-dependent aminotransferase family. HemL subfamily. Homodimer. The cofactor is pyridoxal 5'-phosphate.

The protein resides in the cytoplasm. It catalyses the reaction (S)-4-amino-5-oxopentanoate = 5-aminolevulinate. It functions in the pathway porphyrin-containing compound metabolism; protoporphyrin-IX biosynthesis; 5-aminolevulinate from L-glutamyl-tRNA(Glu): step 2/2. This Symbiobacterium thermophilum (strain DSM 24528 / JCM 14929 / IAM 14863 / T) protein is Glutamate-1-semialdehyde 2,1-aminomutase.